A 155-amino-acid chain; its full sequence is FHA domain-containing protein FhaB (155 aa).

A helical transmembrane segment spans residues 6–28 (LQLTRAGFLMLLWVFIWSVLRIL). Thr36 carries the post-translational modification Phosphothreonine. One can recognise an FHA domain in the interval 83–132 (VLIGRADDSTLVLTDDYASTRHARLSMRGSEWYVEDLGSTNGTYLDRAKV).

Phosphorylated by PknB. Dephosphorylated by PstP.

It localises to the cell membrane. The protein is FHA domain-containing protein FhaB (fhaB) of Mycobacterium tuberculosis (strain CDC 1551 / Oshkosh).